The primary structure comprises 467 residues: GTPase Obg (467 aa).

An Obg domain is found at 1-158 (MFYDEAKIFV…RWLRLELKLL (158 aa)). The OBG-type G domain maps to 159–333 (ADVGLVGLPN…LIRATWERLQ (175 aa)). Residues 165 to 172 (GLPNAGKS), 190 to 194 (FTTLE), 214 to 217 (DLPG), 285 to 288 (NKMD), and 314 to 316 (SAA) contribute to the GTP site. Residues Ser-172 and Thr-192 each contribute to the Mg(2+) site. In terms of domain architecture, OCT spans 352–430 (TLDRSQERWE…VAGRELVWEP (79 aa)).

This sequence belongs to the TRAFAC class OBG-HflX-like GTPase superfamily. OBG GTPase family. As to quaternary structure, monomer. Mg(2+) serves as cofactor.

The protein localises to the cytoplasm. An essential GTPase which binds GTP, GDP and possibly (p)ppGpp with moderate affinity, with high nucleotide exchange rates and a fairly low GTP hydrolysis rate. Plays a role in control of the cell cycle, stress response, ribosome biogenesis and in those bacteria that undergo differentiation, in morphogenesis control. The sequence is that of GTPase Obg from Thermomicrobium roseum (strain ATCC 27502 / DSM 5159 / P-2).